A 136-amino-acid chain; its full sequence is Preprocaerulein type I' (136 aa).

Positions 1–26 (MFKGILLCVLFAVLSANPLSQPEGFA) are cleaved as a signal peptide. Positions 27–136 (DEERDVRGLA…NALGGAPQQR (110 aa)) are excised as a propeptide. Positions 82–101 (GAPQQREANDERRFADDEDD) are disordered.

It belongs to the gastrin/cholecystokinin family. In terms of tissue distribution, expressed by the skin glands.

It localises to the secreted. The pharmacological activities of caerulein are quite similar to the physiological activities of gastrin and related peptides. The chain is Preprocaerulein type I' from Xenopus laevis (African clawed frog).